A 365-amino-acid polypeptide reads, in one-letter code: 2'-hydroxybiphenyl-2-sulfinate desulfinase (365 aa).

Cys-27 is a catalytic residue. Residues Cys-27, His-60, and Arg-70 each contribute to the 2'-hydroxybiphenyl-2-sulfinate site. Arg-70 is a catalytic residue.

This sequence belongs to the DszB desulfinase family. In terms of assembly, monomer.

It is found in the cytoplasm. It carries out the reaction 2'-hydroxybiphenyl-2-sulfinate + H2O = biphenyl-2-ol + sulfite + H(+). Its pathway is sulfur metabolism; dibenzothiophene degradation. In terms of biological role, catalyzes the third and final step of the '4S' desulfurization pathway that removes covalently bound sulfur from dibenzothiophene (DBT) without breaking carbon-carbon bonds. Oxidizes 2-(2'-hydroxyphenyl)benzene sulphinate (HBPS) to 2-hydroxybiphenyl (HBP) plus sulfite. The rate-limiting step of the '4S' desulfurization pathway. The chain is 2'-hydroxybiphenyl-2-sulfinate desulfinase from Rhodococcus erythropolis (Arthrobacter picolinophilus).